The chain runs to 161 residues: Nucleotide-binding protein azo2183 (161 aa).

Belongs to the YajQ family.

Nucleotide-binding protein. The protein is Nucleotide-binding protein azo2183 of Azoarcus sp. (strain BH72).